The following is a 737-amino-acid chain: Fibronectin type III domain-containing protein 7 (737 aa).

The signal sequence occupies residues 1-25; that stretch reads MAGRPEKCFSLIRFTLLCLKMVISS. Fibronectin type-III domains are found at residues 28 to 115, 116 to 203, 204 to 288, 289 to 373, 374 to 459, 460 to 544, 545 to 633, and 631 to 715; these read APEI…TVLA, APVL…SPRA, PANI…TVAC, APGR…TAPC, CPND…TAPC, SPEI…TVPC, CPAG…CPLG, and PLGV…YSVT. The N-linked (GlcNAc...) asparagine glycan is linked to Asn230. Asn433 carries N-linked (GlcNAc...) asparagine glycosylation.

It localises to the secreted. This is Fibronectin type III domain-containing protein 7 (Fndc7) from Mus musculus (Mouse).